The following is a 456-amino-acid chain: Ribosome assembly protein METTL17, mitochondrial (456 aa).

The N-terminal 19 residues, 1 to 19 (MAAALKCLLTLGRWCPGLG), are a transit peptide targeting the mitochondrion. [4Fe-4S] cluster-binding residues include Cys-333, Cys-339, Cys-347, and Cys-404.

The protein belongs to the methyltransferase superfamily. Rsm22 family. In terms of assembly, associates with the mitochondrial ribosome (mitoribosome).

It is found in the mitochondrion matrix. In terms of biological role, mitochondrial ribosome (mitoribosome) assembly factor. Binds at the interface of the head and body domains of the mitochondrial small ribosomal subunit (mt-SSU), occluding the mRNA channel and preventing compaction of the head domain towards the body. Probable inactive methyltransferase: retains the characteristic folding and ability to bind S-adenosyl-L-methionine, but it probably lost its methyltransferase activity. In Homo sapiens (Human), this protein is Ribosome assembly protein METTL17, mitochondrial.